A 208-amino-acid polypeptide reads, in one-letter code: Thiamine-phosphate synthase (208 aa).

Residues 37–39 (QVR) and Asn-70 contribute to the 4-amino-2-methyl-5-(diphosphooxymethyl)pyrimidine site. Asp-71 and Asp-90 together coordinate Mg(2+). Thr-109 provides a ligand contact to 4-amino-2-methyl-5-(diphosphooxymethyl)pyrimidine. 135-137 (TTS) lines the 2-[(2R,5Z)-2-carboxy-4-methylthiazol-5(2H)-ylidene]ethyl phosphate pocket. Lys-138 contacts 4-amino-2-methyl-5-(diphosphooxymethyl)pyrimidine. Ala-166 lines the 2-[(2R,5Z)-2-carboxy-4-methylthiazol-5(2H)-ylidene]ethyl phosphate pocket.

Belongs to the thiamine-phosphate synthase family. Mg(2+) is required as a cofactor.

The catalysed reaction is 2-[(2R,5Z)-2-carboxy-4-methylthiazol-5(2H)-ylidene]ethyl phosphate + 4-amino-2-methyl-5-(diphosphooxymethyl)pyrimidine + 2 H(+) = thiamine phosphate + CO2 + diphosphate. It catalyses the reaction 2-(2-carboxy-4-methylthiazol-5-yl)ethyl phosphate + 4-amino-2-methyl-5-(diphosphooxymethyl)pyrimidine + 2 H(+) = thiamine phosphate + CO2 + diphosphate. The enzyme catalyses 4-methyl-5-(2-phosphooxyethyl)-thiazole + 4-amino-2-methyl-5-(diphosphooxymethyl)pyrimidine + H(+) = thiamine phosphate + diphosphate. Its pathway is cofactor biosynthesis; thiamine diphosphate biosynthesis; thiamine phosphate from 4-amino-2-methyl-5-diphosphomethylpyrimidine and 4-methyl-5-(2-phosphoethyl)-thiazole: step 1/1. Functionally, condenses 4-methyl-5-(beta-hydroxyethyl)thiazole monophosphate (THZ-P) and 2-methyl-4-amino-5-hydroxymethyl pyrimidine pyrophosphate (HMP-PP) to form thiamine monophosphate (TMP). In Salinispora tropica (strain ATCC BAA-916 / DSM 44818 / JCM 13857 / NBRC 105044 / CNB-440), this protein is Thiamine-phosphate synthase.